The sequence spans 344 residues: Olfactory receptor class A-like protein 4 (344 aa).

Topologically, residues 1 to 10 (MSEVLTVDAV) are extracellular. The chain crosses the membrane as a helical span at residues 11–31 (LFGLLVFSGIIGNIMVIYVVF). Residues 32 to 47 (DCAKLCASRHLPPSDT) are Cytoplasmic-facing. A helical transmembrane segment spans residues 48 to 68 (ILVHLCLANLLTSVFRTVPIF). The Extracellular portion of the chain corresponds to 69 to 84 (VSDLGLQVWLTAGWCR). An intrachain disulfide couples C83 to C169. A helical transmembrane segment spans residues 85 to 105 (VFMLLWVWWRAVGCWVTLALS). Residues 106-130 (AFHCATLRRQHVSMGPLGHSRERRR) are Cytoplasmic-facing. Residues 131–151 (VWVVLAVVWAANLLFSLPALV) traverse the membrane as a helical segment. At 152–186 (YTTQVRGNATVELMVISCTTRPLLGCVWEFPTFQQ) the chain is on the extracellular side. N159 carries an N-linked (GlcNAc...) asparagine glycan. A helical transmembrane segment spans residues 187 to 207 (GYAFASSSLALNEVLPLVLMV). Over 208-246 (GTNLATLQALGKHIRTVRAGGSTGAELDRHVSSERKAGH) the chain is Cytoplasmic. Residues 247–267 (VIMALVALFVGCWVLQVAAVT) traverse the membrane as a helical segment. Over 268–279 (YYNHNRGAHAEG) the chain is Extracellular. Residues 280–300 (LLTVAHFSASLFVGFSPLVVA) form a helical membrane-spanning segment. Residues 301–344 (LGHGKLRRRISGILQSCMHRLKQTQDKPAEITEKDGRTTQSAMK) lie on the Cytoplasmic side of the membrane. The span at 324–337 (TQDKPAEITEKDGR) shows a compositional bias: basic and acidic residues. The disordered stretch occupies residues 324-344 (TQDKPAEITEKDGRTTQSAMK).

The protein belongs to the G-protein coupled receptor 1 family. As to expression, highly expressed in the olfactory rosette. Specifically localizes to crypt neurons in the olfactory neuroepithelium. Colocalizes with the inhibitory G-protein gnaia in crypt neurons. Not detected in other tissues tested.

Its subcellular location is the cell membrane. Probable olfactory receptor. The chain is Olfactory receptor class A-like protein 4 (ora4) from Danio rerio (Zebrafish).